Consider the following 2924-residue polypeptide: Probable polyketide synthase 6 (2924 aa).

A Ketosynthase family 3 (KS3) domain is found at 11–442 (EKGVAIVGIG…GSNCCLLISE (432 aa)). Active-site for beta-ketoacyl synthase activity residues include cysteine 181, histidine 323, and histidine 362. Residues 635–668 (GVNPSFILGHSLGEISASYCSGMIDLDTFCYTVY) are acyl/malonyl transferase. The active-site For acyl/malonyl transferase activity is serine 645. Residues 925-1047 (IDHLGLSNSY…SNFQLLDHGN (123 aa)) are N-terminal hotdog fold. Positions 925–1210 (IDHLGLSNSY…CKSLIPIKDS (286 aa)) constitute a PKS/mFAS DH domain. Histidine 959 functions as the Proton acceptor; for dehydratase activity in the catalytic mechanism. The C-terminal hotdog fold stretch occupies residues 1064–1210 (NLSKLTKNEL…CKSLIPIKDS (147 aa)). Residue aspartate 1122 is the Proton donor; for dehydratase activity of the active site. In terms of domain architecture, Carrier spans 2431–2508 (TGNKNIDELF…ISIKMILNSL (78 aa)). Residue serine 2468 is modified to O-(pantetheine 4'-phosphoryl)serine. The helical transmembrane segment at 2551 to 2571 (KIILLTGTTGFLGGFLLFNML) threads the bilayer.

It depends on pantetheine 4'-phosphate as a cofactor.

It localises to the membrane. Functionally, probable polyketide synthase. The polypeptide is Probable polyketide synthase 6 (pks6) (Dictyostelium discoideum (Social amoeba)).